The following is a 412-amino-acid chain: AA9 family lytic polysaccharide monooxygenase A (412 aa).

A signal peptide spans 1-20 (MKTTTYSLLALAAASKLASA). Cu(2+) is bound by residues His21 and His103. Cys63 and Cys186 are oxidised to a cystine. N-linked (GlcNAc...) asparagine glycosylation is present at Asn151. Residue His172 participates in O2 binding. Tyr183 contacts Cu(2+). N-linked (GlcNAc...) asparagine glycans are attached at residues Asn334 and Asn385. The CBM1 domain occupies 373 to 409 (GVAKMYERCGGINHTGPTTCESGSVCKKWNPYYYQCV).

The protein belongs to the polysaccharide monooxygenase AA9 family. Cu(2+) is required as a cofactor.

Its subcellular location is the secreted. The catalysed reaction is [(1-&gt;4)-beta-D-glucosyl]n+m + reduced acceptor + O2 = 4-dehydro-beta-D-glucosyl-[(1-&gt;4)-beta-D-glucosyl]n-1 + [(1-&gt;4)-beta-D-glucosyl]m + acceptor + H2O.. In terms of biological role, lytic polysaccharide monooxygenase (LPMO) that depolymerizes crystalline and amorphous polysaccharides via the oxidation of scissile alpha- or beta-(1-4)-glycosidic bonds, yielding C4 oxidation products. Catalysis by LPMOs requires the reduction of the active-site copper from Cu(II) to Cu(I) by a reducing agent and H(2)O(2) or O(2) as a cosubstrate. The protein is AA9 family lytic polysaccharide monooxygenase A (eglD) of Aspergillus niger (strain ATCC MYA-4892 / CBS 513.88 / FGSC A1513).